Here is a 294-residue protein sequence, read N- to C-terminus: MAMSSGGSGSGVPEQEDAVLFRRGTGQSDDSDIWDDTALIKAYDKAVASFKHALKNGDICETSGKSKTTPKRKPAKKNKSQKKNTAASLQQWKVGDKCSAIWSEDGCIYPATIASIDFKRETCVVVYTGYGNREEQNLSDLLSPICEVANNIEQNAQENENESQVSTDESENSRSPGNKSDNIKPKSAPWNSFLPPPPPMPGPRLGPGKPGLKFNGPPPPPPPPPPHLLSCWLPPFPSGPPIIPPPPPICPDSLDDADALGSMLISWYMSGYHTGYYMGFRQNQKEGRCSHSLN.

Residues 1-10 (MAMSSGGSGS) are compositionally biased toward gly residues. Residues 1–32 (MAMSSGGSGSGVPEQEDAVLFRRGTGQSDDSD) form a disordered region. Alanine 2 carries the N-acetylalanine modification. Serine 4, serine 5, and serine 8 each carry phosphoserine; by PKA. Residues 13–44 (PEQEDAVLFRRGTGQSDDSDIWDDTALIKAYD) are P1 (binding site for GEMIN2). Threonine 25 is subject to Phosphothreonine. A phosphoserine mark is found at serine 28 and serine 31. Lysine 51 is covalently cross-linked (Glycyl lysine isopeptide (Lys-Gly) (interchain with G-Cter in SUMO2)). The disordered stretch occupies residues 60–88 (CETSGKSKTTPKRKPAKKNKSQKKNTAAS). A compositionally biased stretch (basic residues) spans 68–82 (TTPKRKPAKKNKSQK). Threonine 69 carries the post-translational modification Phosphothreonine. Threonine 85 carries the post-translational modification Phosphothreonine; by PKA. The 61-residue stretch at 91 to 151 (QWKVGDKCSA…LSPICEVANN (61 aa)) folds into the Tudor domain. The segment at 97 to 209 (KCSAIWSEDG…MPGPRLGPGK (113 aa)) is required for interaction with RPP20/POP7. Residues 156–166 (AQENENESQVS) are compositionally biased toward low complexity. A disordered region spans residues 156-222 (AQENENESQV…KFNGPPPPPP (67 aa)). A Phosphoserine; by PKA modification is found at serine 187. A compositionally biased stretch (pro residues) spans 194–204 (LPPPPPMPGPR). The segment covering 206–215 (GPGKPGLKFN) has biased composition (low complexity). Lysine 209 participates in a covalent cross-link: Glycyl lysine isopeptide (Lys-Gly) (interchain with G-Cter in SUMO2). The P2 (binding site for SM B) stretch occupies residues 240-267 (PPIIPPPPPICPDSLDDADALGSMLISW). The required for interaction with SYNCRIP stretch occupies residues 279–294 (GFRQNQKEGRCSHSLN).

It belongs to the SMN family. In terms of assembly, homooligomer; may form higher order homooligomers in the dimer to octamer range. Part of the core SMN complex that contains SMN1, GEMIN2/SIP1, DDX20/GEMIN3, GEMIN4, GEMIN5, GEMIN6, GEMIN7, GEMIN8 and STRAP/UNRIP. Part of the SMN-Sm complex that contains SMN1, GEMIN2/SIP1, DDX20/GEMIN3, GEMIN4, GEMIN5, GEMIN6, GEMIN7, GEMIN8, STRAP/UNRIP and the Sm proteins SNRPB, SNRPD1, SNRPD2, SNRPD3, SNRPE, SNRPF and SNRPG. Component of an import snRNP complex composed of KPNB1, RNUT1, SMN1 and ZNF259. Interacts with DDX20, FBL, NOLA1, RNUT1, SYNCRIP and with several spliceosomal snRNP core Sm proteins, including SNRPB, SNRPD1, SNRPD2, SNRPD3, SNRPE and ILF3. Interacts with GEMIN2; the interaction is direct. Interacts with GEMIN3; the interaction is direct. Interacts with GEMIN8; the interaction is direct. Interacts with SNRPB; the interaction is direct. Interacts (via Tudor domain) with SNRPD1 (via C-terminus); the interaction is direct. Interacts with SNRPD2; the interaction is direct. Interacts (via Tudor domain) with SNRPD3 (via C-terminus); the interaction is direct. Interacts with SNRPE; the interaction is direct. Interacts with OSTF1, LSM10, LSM11 and RPP20/POP7. Interacts (via C-terminal region) with ZPR1 (via C-terminal region). Interacts (via Tudor domain) with COIL. Interacts with SETX; recruits SETX to POLR2A. Interacts with POLR2A (via the C-terminal domain (CTD)). Interacts with PRMT5. Interacts with XRN2. Interacts (via C-terminus) with FMR1 (via C-terminus); the interaction is direct and occurs in a RNA-independent manner. Interacts (via Tudor domain) with SF3B2 ('Arg-508'-methylated form). Interacts with WRAP53/TCAB1. Interacts (via Tudor domain) with ELAVL4 in an RNA-independent manner; the interaction is required for localization of ELAVL4 to RNA granules. Interacts with FRG1.

The protein resides in the nucleus. The protein localises to the gem. Its subcellular location is the cajal body. It localises to the cytoplasm. It is found in the cytoplasmic granule. The protein resides in the perikaryon. The protein localises to the cell projection. Its subcellular location is the neuron projection. It localises to the axon. It is found in the myofibril. The protein resides in the sarcomere. The protein localises to the z line. In terms of biological role, the SMN complex catalyzes the assembly of small nuclear ribonucleoproteins (snRNPs), the building blocks of the spliceosome, and thereby plays an important role in the splicing of cellular pre-mRNAs. Most spliceosomal snRNPs contain a common set of Sm proteins SNRPB, SNRPD1, SNRPD2, SNRPD3, SNRPE, SNRPF and SNRPG that assemble in a heptameric protein ring on the Sm site of the small nuclear RNA to form the core snRNP (Sm core). In the cytosol, the Sm proteins SNRPD1, SNRPD2, SNRPE, SNRPF and SNRPG are trapped in an inactive 6S pICln-Sm complex by the chaperone CLNS1A that controls the assembly of the core snRNP. To assemble core snRNPs, the SMN complex accepts the trapped 5Sm proteins from CLNS1A forming an intermediate. Binding of snRNA inside 5Sm ultimately triggers eviction of the SMN complex, thereby allowing binding of SNRPD3 and SNRPB to complete assembly of the core snRNP. Within the SMN complex, SMN1 acts as a structural backbone and together with GEMIN2 it gathers the Sm complex subunits. Ensures the correct splicing of U12 intron-containing genes that may be important for normal motor and proprioceptive neurons development. Also required for resolving RNA-DNA hybrids created by RNA polymerase II, that form R-loop in transcription terminal regions, an important step in proper transcription termination. May also play a role in the metabolism of small nucleolar ribonucleoprotein (snoRNPs). This Pongo abelii (Sumatran orangutan) protein is Survival motor neuron protein (SMN1).